A 433-amino-acid chain; its full sequence is Enolase (433 aa).

Gln167 lines the (2R)-2-phosphoglycerate pocket. Catalysis depends on Glu209, which acts as the Proton donor. 3 residues coordinate Mg(2+): Asp246, Glu291, and Asp318. Residues Lys343, Arg372, Ser373, and Lys394 each contribute to the (2R)-2-phosphoglycerate site. Lys343 functions as the Proton acceptor in the catalytic mechanism.

This sequence belongs to the enolase family. As to quaternary structure, component of the RNA degradosome, a multiprotein complex involved in RNA processing and mRNA degradation. It depends on Mg(2+) as a cofactor.

The protein localises to the cytoplasm. Its subcellular location is the secreted. The protein resides in the cell surface. It carries out the reaction (2R)-2-phosphoglycerate = phosphoenolpyruvate + H2O. It functions in the pathway carbohydrate degradation; glycolysis; pyruvate from D-glyceraldehyde 3-phosphate: step 4/5. Its function is as follows. Catalyzes the reversible conversion of 2-phosphoglycerate (2-PG) into phosphoenolpyruvate (PEP). It is essential for the degradation of carbohydrates via glycolysis. The sequence is that of Enolase from Photobacterium profundum (strain SS9).